A 190-amino-acid chain; its full sequence is Small ribosomal subunit protein uS5 (190 aa).

Positions phenylalanine 22–valine 85 constitute an S5 DRBM domain.

This sequence belongs to the universal ribosomal protein uS5 family. In terms of assembly, part of the 30S ribosomal subunit. Contacts proteins S4 and S8.

Its function is as follows. With S4 and S12 plays an important role in translational accuracy. In terms of biological role, located at the back of the 30S subunit body where it stabilizes the conformation of the head with respect to the body. The protein is Small ribosomal subunit protein uS5 of Rhodopseudomonas palustris (strain BisA53).